The chain runs to 441 residues: Amino-acid acetyltransferase (441 aa).

The N-acetyltransferase domain occupies 295–434; sequence EQVRRATIND…QELYNYQRRS (140 aa).

Belongs to the acetyltransferase family. ArgA subfamily. As to quaternary structure, homohexamer.

Its subcellular location is the cytoplasm. It carries out the reaction L-glutamate + acetyl-CoA = N-acetyl-L-glutamate + CoA + H(+). The protein operates within amino-acid biosynthesis; L-arginine biosynthesis; N(2)-acetyl-L-ornithine from L-glutamate: step 1/4. The protein is Amino-acid acetyltransferase of Yersinia pseudotuberculosis serotype O:1b (strain IP 31758).